The primary structure comprises 467 residues: MSALRSFQRSSNVAKSTLKNSVRTYATAEPTLKQRLEEILPAKAEEVKQLKKDYGKTVIGEVLLEQAYGGMRGIKGLVWEGSVLDPIEGIRFRGRTIPDIQKELPKAPGGEEPLPEALFWLLLTGEVPTEAQTRALSEEFAARSALPKHVEELIDRSPSHLHPMAQFSIAVTALESESQFAKAYAKGVHKSEYWKYTYEDSIELLAKLPTIAAKIYRNVFHDGKLPAQIDSKLDYGANLASLLGFGENKEFLELMRLYLTIHSDHEGGNVSAHTTHLVGSALSSPFLSLAAGLNGLAGPLHGRANQEVLEWLFKLREELNGDYSKEAIEKYLWDTLNAGRVGPGYGHAVLRKTDPRYTAQREFALKHMPDYELFKLVSNIYEVAPGVFDQHGMTKNPWPNVGSHSGVLLQYYGLTEESFYTVLFGVSRAFGVLPQLILDRGLGMPIERPKSFSTEKYIELVKSIGKN.

Active-site residues include His301 and His347.

Belongs to the citrate synthase family.

It is found in the mitochondrion matrix. It catalyses the reaction oxaloacetate + acetyl-CoA + H2O = citrate + CoA + H(+). It participates in carbohydrate metabolism; tricarboxylic acid cycle; isocitrate from oxaloacetate: step 1/2. The sequence is that of Citrate synthase, mitochondrial (CIT) from Candida tropicalis (Yeast).